Reading from the N-terminus, the 472-residue chain is MKFLIFAFFGGVHLLSLCSGKAICKNGISKRTFEEIKEEIASCGDVAKAIINLAVYGKAQNRSYERLALLVDTVGPRLSGSKNLEKAIQIMYQNLQQDGLEKVHLEPVRIPHWERGEESAVMLEPRIHKIAILGLGSSIGTPPEGITAEVLVVTSFDELQRRASEARGKIVVYNQPYINYSRTVQYRTQGAVEAAKVGALASLIRSVASFSIYSPHTGIQEYQDGVPKIPTACITVEDAEMMSRMASHGIKIVIQLKMGAKTYPDTDSFNTVAEITGSKYPEQVVLVSGHLDSWDVGQGAMDDGGGAFISWEALSLIKDLGLRPKRTLRLVLWTAEEQGGVGAFQYYQLHKVNISNYSLVMESDAGTFLPTGLQFTGSEKARAIMEEVMSLLQPLNITQVLSHGEGTDINFWIQAGVPGASLLDDLYKYFFFHHSHGDTMTVMDPKQMNVAAAVWAVVSYVVADMEEMLPRS.

The N-terminal stretch at 1-20 (MKFLIFAFFGGVHLLSLCSG) is a signal peptide. Positions 21–44 (KAICKNGISKRTFEEIKEEIASCG) are excised as a propeptide. Asn-61 and Asn-179 each carry an N-linked (GlcNAc...) asparagine glycan. His-290 and Asp-302 together coordinate Zn(2+). Glu-336 functions as the Nucleophile in the catalytic mechanism. Glu-337 is a Zn(2+) binding site. 2 N-linked (GlcNAc...) asparagine glycosylation sites follow: Asn-353 and Asn-356. A Zn(2+)-binding site is contributed by Asp-364. A glycan (N-linked (GlcNAc...) asparagine) is linked at Asn-396. Residue His-434 coordinates Zn(2+).

The protein belongs to the peptidase M28 family. As to quaternary structure, homodimer. The monomeric form is inactive while the homodimer is active. Post-translationally, N-glycosylated. The secreted form is modified by hybrid or complex type oligosaccharide chains. In terms of tissue distribution, mainly detected in blood plasma. Abundant in placenta and kidney. Present at low level in muscles, liver and skin fibroblasts. Not detected in brain or white blood cells (at protein level).

It is found in the endoplasmic reticulum. It localises to the golgi apparatus. The protein resides in the lysosome. Its subcellular location is the secreted. Its function is as follows. Carboxypeptidase that may play an important role in the hydrolysis of circulating peptides. Catalyzes the hydrolysis of dipeptides with unsubstituted terminals into amino acids. May play a role in the liberation of thyroxine hormone from its thyroglobulin (Tg) precursor. The sequence is that of Carboxypeptidase Q (CPQ) from Homo sapiens (Human).